The sequence spans 87 residues: MAHKKAGGSSRNGRDSESKRLGVKRFGGQVVLAGNILVRQRGTQFHPGDNVGIGKDHTLFAKTDGTVKFEIKGAARRKVVRIEPLAA.

Positions 1–20 are disordered; it reads MAHKKAGGSSRNGRDSESKR.

Belongs to the bacterial ribosomal protein bL27 family.

The chain is Large ribosomal subunit protein bL27 from Thiobacillus denitrificans (strain ATCC 25259 / T1).